Consider the following 262-residue polypeptide: Type III pantothenate kinase (262 aa).

Residue 6–13 (DVGNTNAV) participates in ATP binding. Residues tyrosine 100 and 107–110 (GADR) each bind substrate. Aspartate 109 serves as the catalytic Proton acceptor. Residue aspartate 129 participates in K(+) binding. Threonine 132 is an ATP binding site. Position 184 (threonine 184) interacts with substrate.

The protein belongs to the type III pantothenate kinase family. In terms of assembly, homodimer. NH4(+) serves as cofactor. It depends on K(+) as a cofactor.

It localises to the cytoplasm. The enzyme catalyses (R)-pantothenate + ATP = (R)-4'-phosphopantothenate + ADP + H(+). It functions in the pathway cofactor biosynthesis; coenzyme A biosynthesis; CoA from (R)-pantothenate: step 1/5. Catalyzes the phosphorylation of pantothenate (Pan), the first step in CoA biosynthesis. In Bacillus cytotoxicus (strain DSM 22905 / CIP 110041 / 391-98 / NVH 391-98), this protein is Type III pantothenate kinase.